The following is a 179-amino-acid chain: Large ribosomal subunit protein uL5 (179 aa).

The protein belongs to the universal ribosomal protein uL5 family. As to quaternary structure, part of the 50S ribosomal subunit; part of the 5S rRNA/L5/L18/L25 subcomplex. Contacts the 5S rRNA and the P site tRNA. Forms a bridge to the 30S subunit in the 70S ribosome.

Functionally, this is one of the proteins that bind and probably mediate the attachment of the 5S RNA into the large ribosomal subunit, where it forms part of the central protuberance. In the 70S ribosome it contacts protein S13 of the 30S subunit (bridge B1b), connecting the 2 subunits; this bridge is implicated in subunit movement. Contacts the P site tRNA; the 5S rRNA and some of its associated proteins might help stabilize positioning of ribosome-bound tRNAs. The protein is Large ribosomal subunit protein uL5 of Burkholderia ambifaria (strain MC40-6).